The chain runs to 162 residues: Shikimate kinase (162 aa).

Position 11-16 (11-16 (GSGKSS)) interacts with ATP. Serine 15 lines the Mg(2+) pocket. Substrate-binding residues include aspartate 33, arginine 57, and glycine 80. Arginine 116 serves as a coordination point for ATP. Arginine 132 contributes to the substrate binding site.

This sequence belongs to the shikimate kinase family. In terms of assembly, monomer. Mg(2+) serves as cofactor.

It is found in the cytoplasm. It catalyses the reaction shikimate + ATP = 3-phosphoshikimate + ADP + H(+). It participates in metabolic intermediate biosynthesis; chorismate biosynthesis; chorismate from D-erythrose 4-phosphate and phosphoenolpyruvate: step 5/7. Its function is as follows. Catalyzes the specific phosphorylation of the 3-hydroxyl group of shikimic acid using ATP as a cosubstrate. The protein is Shikimate kinase of Helicobacter pylori (strain Shi470).